The sequence spans 20 residues: IVPFLLGMVPKLICLITKKC.

A Methionine sulfoxide; partial modification is found at Met8. A disulfide bond links Cys14 and Cys20.

It belongs to the frog skin active peptide (FSAP) family. Brevinin subfamily. Expressed by the skin glands.

The protein localises to the secreted. Its function is as follows. Antimicrobial peptide. The protein is Brevinin-1ITb of Rana italica (Italian stream frog).